A 266-amino-acid polypeptide reads, in one-letter code: Zinc finger protein SNAI2 (266 aa).

The SNAG domain stretch occupies residues 1–20; that stretch reads MPRSFLVKKHFNSAKKPNYG. Positions 75–115 are disordered; that stretch reads SGYPSSLGRVSPPPQSDTSSKDHSGSESPISDEEERLQTKL. 4 C2H2-type zinc fingers span residues 126 to 148, 157 to 179, 183 to 205, and 211 to 233; these read FQCS…KQLH, FSCK…IRTH, CVCK…IRTH, and FSCP…LQTH. Residues 239 to 262 form a C2H2-type 5; atypical zinc finger; sequence YQCKNCSKTFSRMSLLHKHEESGC.

This sequence belongs to the snail C2H2-type zinc-finger protein family. As to quaternary structure, interacts (via SNAG domain) with limd1 (via LIM domains), wtip (via LIM domains) and ajuba (via LIM domains). Interacts with elp3. In terms of tissue distribution, first expressed on the lateral side of stage 12 embryos. At stage 14, strongly expressed in the lateral neural folds. At stage 16, expressed in pre-migratory neural crest cells. At stage 18, expression is dispersed over the neural plate in a pattern surrounding the rhombomeres. At stage 22, expressed in neural crest derivatives, including the branchial arches and the tissues surrounding the eyes and forebrain. After stage 17, expression is weak in the lateral plate mesoderm, increasing at stage 26, but was down-regulated in the pronephros region at stage 26.

It is found in the nucleus. Probable transcriptional repressor. Acts downstream of snai1 in the specification of the neural crest and neural crest migration. In Xenopus laevis (African clawed frog), this protein is Zinc finger protein SNAI2 (snai2).